The sequence spans 233 residues: Superoxide dismutase [Mn], mitochondrial (233 aa).

Residues 1–27 constitute a mitochondrion transit peptide; the sequence is MALRSLVTRKNLPSAFKAATGLGQLRG. The Mn(2+) site is built by His55, His103, Asp192, and His196.

It belongs to the iron/manganese superoxide dismutase family. As to quaternary structure, homotetramer. Mn(2+) serves as cofactor. As to expression, present in all tissues examined (leaf, petiole, root, latex, callus) with young leaves showing the highest levels in intact plants.

Its subcellular location is the mitochondrion matrix. The catalysed reaction is 2 superoxide + 2 H(+) = H2O2 + O2. Destroys superoxide anion radicals which are normally produced within the cells and which are toxic to biological systems. This is Superoxide dismutase [Mn], mitochondrial (SODA) from Hevea brasiliensis (Para rubber tree).